The following is a 399-amino-acid chain: Elongation factor Tu (399 aa).

The region spanning 10-204 (KPHVNIGTIG…AVDANIPEPV (195 aa)) is the tr-type G domain. The interval 19–26 (GHVDHGKT) is G1. Residue 19–26 (GHVDHGKT) coordinates GTP. Mg(2+) is bound at residue Thr26. A G2 region spans residues 60–64 (GITIN). Residues 81–84 (DCPG) form a G3 region. GTP contacts are provided by residues 81 to 85 (DCPGH) and 136 to 139 (NKCD). The segment at 136–139 (NKCD) is G4. The interval 174–176 (SGL) is G5.

Belongs to the TRAFAC class translation factor GTPase superfamily. Classic translation factor GTPase family. EF-Tu/EF-1A subfamily. As to quaternary structure, monomer.

The protein resides in the cytoplasm. It carries out the reaction GTP + H2O = GDP + phosphate + H(+). Functionally, GTP hydrolase that promotes the GTP-dependent binding of aminoacyl-tRNA to the A-site of ribosomes during protein biosynthesis. The protein is Elongation factor Tu of Synechococcus sp. (strain RCC307).